The primary structure comprises 315 residues: Aspartate carbamoyltransferase catalytic subunit (315 aa).

Carbamoyl phosphate contacts are provided by R64 and T65. Position 92 (K92) interacts with L-aspartate. Residues R114, H142, and Q145 each coordinate carbamoyl phosphate. Residues R175 and R229 each coordinate L-aspartate. Carbamoyl phosphate contacts are provided by G270 and P271.

It belongs to the aspartate/ornithine carbamoyltransferase superfamily. ATCase family. As to quaternary structure, heterododecamer (2C3:3R2) of six catalytic PyrB chains organized as two trimers (C3), and six regulatory PyrI chains organized as three dimers (R2).

The catalysed reaction is carbamoyl phosphate + L-aspartate = N-carbamoyl-L-aspartate + phosphate + H(+). Its pathway is pyrimidine metabolism; UMP biosynthesis via de novo pathway; (S)-dihydroorotate from bicarbonate: step 2/3. Functionally, catalyzes the condensation of carbamoyl phosphate and aspartate to form carbamoyl aspartate and inorganic phosphate, the committed step in the de novo pyrimidine nucleotide biosynthesis pathway. This Methylorubrum populi (strain ATCC BAA-705 / NCIMB 13946 / BJ001) (Methylobacterium populi) protein is Aspartate carbamoyltransferase catalytic subunit.